The primary structure comprises 1122 residues: Telomerase reverse transcriptase (1122 aa).

The segment at Met-1–Thr-239 is RNA-interacting domain 1. Residues Met-58 to Leu-205 form a GQ motif region. The required for regulating specificity for telomeric DNA and for processivity for primer elongation stretch occupies residues Trp-137–Leu-141. Residues Ser-213 to Ser-296 form a disordered region. The segment at Ser-240 to Pro-328 is linker. Positions Thr-284 to Val-295 are enriched in basic and acidic residues. Residues Cys-306–Glu-528 form a required for oligomerization region. The tract at residues Phe-329 to Asp-540 is RNA-interacting domain 2. Positions Thr-332–Tyr-337 match the TFLY; involved in RNA binding motif. A QFP motif region spans residues Leu-381 to Arg-511. The segment at Leu-402–Thr-422 is CP motif. The residue at position 447 (Ser-447) is a Phosphoserine; by DYRK2. The Reverse transcriptase domain occupies Glu-595–Leu-928. Residue Tyr-697 is modified to Phosphotyrosine; by SRC-type Tyr-kinases. Positions 702, 861, and 862 each coordinate Mg(2+). The interval Leu-907 to Phe-921 is required for oligomerization. A primer grip sequence region spans residues Trp-923–Leu-927. The CTE stretch occupies residues Asp-929 to Asp-1122.

This sequence belongs to the reverse transcriptase family. Telomerase subfamily. As to quaternary structure, catalytic component of the telomerase holoenzyme complex composed of one molecule of TERT, one molecule of WRAP53/TCAB1, two molecules of H/ACA ribonucleoprotein complex subunits DKC1, NOP10, NHP2 and GAR1, and a telomerase RNA template component (TERC). The telomerase holoenzyme complex is associated with TEP1, SMG6/EST1A and POT1. The molecular chaperone HSP90/P23 complex is required for correct assembly and stabilization of the active telomerase. Interacts directly with HSP90A and PTGES3. Interacts with HSPA1A; the interaction occurs in the absence of TERC and dissociates once the complex has formed. Interacts with RAN; the interaction promotes nuclear export of TERT. Interacts with XPO1. Interacts with PTPN11; the interaction retains TERT in the nucleus. Interacts with NCL (via RRM1 and C-terminal RRM4/Arg/Gly-rich domains); the interaction is important for nucleolar localization of TERT. Interacts with SMARCA4 (via the bromodomain); the interaction regulates Wnt-mediated signaling. Interacts with MCRS1 (isoform MCRS2); the interaction inhibits in vitro telomerase activity. Interacts with PIF1; the interaction has no effect on the elongation activity of TERT. Interacts with PML; the interaction recruits TERT to PML bodies and inhibits telomerase activity. Interacts with GNL3L. Interacts with isoform 1 and isoform 2 of NVL. Interacts with DHX36. Interacts with ATF7. Post-translationally, phosphorylation at Tyr-697 under oxidative stress leads to translocation of TERT to the cytoplasm and reduces its antiapoptotic activity. Dephosphorylated by SHP2/PTPN11 leading to nuclear retention. Phosphorylation by the AKT pathway promotes nuclear location. Phosphorylation at the G2/M phase at Ser-447 by DYRK2 promotes ubiquitination by the EDVP complex and degradation. In terms of processing, ubiquitinated by the EDVP complex, a E3 ligase complex following phosphorylation at Ser-447 by DYRK2. Ubiquitinated leads to proteasomal degradation. In terms of tissue distribution, high activity in intestine, liver and testis, moderate in lung, very low in muscle, heart and brain.

The protein resides in the nucleus. Its subcellular location is the nucleolus. It is found in the nucleoplasm. The protein localises to the chromosome. It localises to the telomere. The protein resides in the cytoplasm. Its subcellular location is the PML body. It carries out the reaction DNA(n) + a 2'-deoxyribonucleoside 5'-triphosphate = DNA(n+1) + diphosphate. Telomerase is a ribonucleoprotein enzyme essential for the replication of chromosome termini in most eukaryotes. Active in progenitor and cancer cells. Inactive, or very low activity, in normal somatic cells. Catalytic component of the teleromerase holoenzyme complex whose main activity is the elongation of telomeres by acting as a reverse transcriptase that adds simple sequence repeats to chromosome ends by copying a template sequence within the RNA component of the enzyme. Catalyzes the RNA-dependent extension of 3'-chromosomal termini with the 6-nucleotide telomeric repeat unit, 5'-TTAGGG-3'. The catalytic cycle involves primer binding, primer extension and release of product once the template boundary has been reached or nascent product translocation followed by further extension. More active on substrates containing 2 or 3 telomeric repeats. Telomerase activity is regulated by a number of factors including telomerase complex-associated proteins, chaperones and polypeptide modifiers. Modulates Wnt signaling. Plays important roles in aging and antiapoptosis. The protein is Telomerase reverse transcriptase (Tert) of Mus musculus (Mouse).